The chain runs to 178 residues: Ribosome maturation factor RimP (178 aa).

It belongs to the RimP family.

It is found in the cytoplasm. In terms of biological role, required for maturation of 30S ribosomal subunits. The chain is Ribosome maturation factor RimP from Caulobacter vibrioides (strain ATCC 19089 / CIP 103742 / CB 15) (Caulobacter crescentus).